Here is a 242-residue protein sequence, read N- to C-terminus: Small ribosomal subunit protein uS2 (242 aa).

The protein belongs to the universal ribosomal protein uS2 family.

The chain is Small ribosomal subunit protein uS2 from Shewanella halifaxensis (strain HAW-EB4).